The following is a 266-amino-acid chain: Outer membrane protein OmpK (266 aa).

The N-terminal stretch at M1–A20 is a signal peptide.

The protein belongs to the nucleoside-specific channel-forming outer membrane porin (Tsx) (TC 1.B.10) family.

Its subcellular location is the cell outer membrane. Functionally, serves as receptor for a broad-host-range vibriophage, KVP40. This chain is Outer membrane protein OmpK (ompK), found in Vibrio parahaemolyticus serotype O3:K6 (strain RIMD 2210633).